The primary structure comprises 766 residues: 5-methyltetrahydropteroyltriglutamate--homocysteine methyltransferase (766 aa).

5-methyltetrahydropteroyltri-L-glutamate is bound by residues 16 to 19 (RELK) and Lys117. Residues 442–444 (IGS) and Glu495 each bind L-homocysteine. Residues 442–444 (IGS) and Glu495 each bind L-methionine. Residues 526–527 (RC) and Trp572 contribute to the 5-methyltetrahydropteroyltri-L-glutamate site. Asp610 serves as a coordination point for L-homocysteine. Asp610 lines the L-methionine pocket. Glu616 is a binding site for 5-methyltetrahydropteroyltri-L-glutamate. Residues His652, Cys654, and Glu676 each contribute to the Zn(2+) site. The active-site Proton donor is the His705. Cys737 contacts Zn(2+).

The protein belongs to the vitamin-B12 independent methionine synthase family. Zn(2+) is required as a cofactor.

It carries out the reaction 5-methyltetrahydropteroyltri-L-glutamate + L-homocysteine = tetrahydropteroyltri-L-glutamate + L-methionine. It functions in the pathway amino-acid biosynthesis; L-methionine biosynthesis via de novo pathway; L-methionine from L-homocysteine (MetE route): step 1/1. Functionally, catalyzes the transfer of a methyl group from 5-methyltetrahydrofolate to homocysteine resulting in methionine formation. In Bordetella avium (strain 197N), this protein is 5-methyltetrahydropteroyltriglutamate--homocysteine methyltransferase.